The following is a 201-amino-acid chain: Natural cytotoxicity triggering receptor 3 (201 aa).

Positions 1 to 18 (MAWMLLLILIMVYPGSCA) are cleaved as a signal peptide. Positions 19-126 (LWVSQPPEIR…VGTGNGTRLV (108 aa)) constitute an Ig-like domain. The Extracellular segment spans residues 19–133 (LWVSQPPEIR…RLVVEKEYPQ (115 aa)). Cys39 and Cys108 are oxidised to a cystine. Residues Asn42 and Asn121 are each glycosylated (N-linked (GlcNAc...) asparagine). Residues 134-154 (LGAGTVLLLRAGFYAVSFLSV) form a helical membrane-spanning segment. At 155–201 (AMGSTLYYQGKCLTWKGPRRQLPAVVPGPLPPPCGSSAHLLPPVPGG) the chain is on the cytoplasmic side.

Belongs to the natural cytotoxicity receptor (NCR) family. As to quaternary structure, homodimer in the unliganted form. Interacts with CD3Z. Interacts with and is activated by binding to NCR3LG1. Interacts with and is activated by binding to BAG6. Interacts with and is inhibited by binding to LGALS3.

The protein resides in the cell membrane. Functionally, cell membrane receptor of natural killer/NK cells that is activated by binding of extracellular ligands including BAG6 and NCR3LG1. Stimulates NK cells cytotoxicity toward neighboring cells producing these ligands. It controls, for instance, NK cells cytotoxicity against tumor cells. Engagement of NCR3 by BAG6 also promotes myeloid dendritic cells (DC) maturation, both through killing DCs that did not acquire a mature phenotype, and inducing the release by NK cells of TNFA and IFNG that promote DC maturation. This chain is Natural cytotoxicity triggering receptor 3 (NCR3), found in Macaca mulatta (Rhesus macaque).